We begin with the raw amino-acid sequence, 299 residues long: Oxaloacetate decarboxylase (299 aa).

S57 provides a ligand contact to substrate. D95 lines the Mg(2+) pocket. Substrate is bound by residues R167 and H243.

Belongs to the isocitrate lyase/PEP mutase superfamily. Oxaloacetate decarboxylase family. As to quaternary structure, homotetramer; dimer of dimers. Mg(2+) serves as cofactor.

The enzyme catalyses oxaloacetate + H(+) = pyruvate + CO2. Catalyzes the decarboxylation of oxaloacetate into pyruvate. Seems to play a role in maintaining cellular concentrations of bicarbonate and pyruvate. The protein is Oxaloacetate decarboxylase of Paraburkholderia xenovorans (strain LB400).